The sequence spans 281 residues: MSIKVTGLTYVYMKGTPYEKKALDNINLSIETGEFVGIIGHTGSGKSTLVQHFNGLLKPTSGSVYINGEELTGQRAKELKKQVGIVFQYPEHQLFEETVYKDIAFGLVRRGEEKDEIYRKVRKTIRLVGLSEDILDKSPFELSGGQKRRVAMAGILVLEPSILVLDEPAAGLDPKGREEIFELVSNLHKNNKMTVILVSHSMEDVAKYVQRVIVMNQGRIEMCGPVRSVFKNTETLEEIGLAAPQITYLMKKLKEKIPQINDDILTIAEAKEELAKYIRKA.

Residues 3–242 form the ABC transporter domain; it reads IKVTGLTYVY…TETLEEIGLA (240 aa). 40–47 is a binding site for ATP; it reads GHTGSGKS.

It belongs to the ABC transporter superfamily. Energy-coupling factor EcfA family. Forms a stable energy-coupling factor (ECF) transporter complex composed of 2 membrane-embedded substrate-binding proteins (S component), 2 ATP-binding proteins (A component) and 2 transmembrane proteins (T component).

It is found in the cell membrane. Functionally, ATP-binding (A) component of a common energy-coupling factor (ECF) ABC-transporter complex. Unlike classic ABC transporters this ECF transporter provides the energy necessary to transport a number of different substrates. This Acetivibrio thermocellus (strain ATCC 27405 / DSM 1237 / JCM 9322 / NBRC 103400 / NCIMB 10682 / NRRL B-4536 / VPI 7372) (Clostridium thermocellum) protein is Energy-coupling factor transporter ATP-binding protein EcfA2.